The primary structure comprises 388 residues: D-xylose dehydrogenase (388 aa).

The protein belongs to the Gfo/Idh/MocA family. As to quaternary structure, homotetramer. It depends on Zn(2+) as a cofactor.

It carries out the reaction D-xylose + NADP(+) = D-xylono-1,5-lactone + NADPH + H(+). It catalyses the reaction D-xylose + NAD(+) = D-xylono-1,5-lactone + NADH + H(+). It participates in carbohydrate metabolism; D-xylose degradation. In terms of biological role, catalyzes the NADP(+)-dependent oxidation of D-xylose. Is able to use both NADP(+) and NAD(+); however, the enzyme shows a very strong preference for NADP(+). Is likely involved in the first step of the oxidative D-xylose degradation pathway. In Paenarthrobacter nicotinovorans (Arthrobacter nicotinovorans), this protein is D-xylose dehydrogenase (xdh).